A 459-amino-acid polypeptide reads, in one-letter code: Putrescine aminotransferase (459 aa).

Pyridoxal 5'-phosphate is bound by residues 150–151 (GT) and Q274. K300 carries the N6-(pyridoxal phosphate)lysine modification. T332 serves as a coordination point for pyridoxal 5'-phosphate.

It belongs to the class-III pyridoxal-phosphate-dependent aminotransferase family. Putrescine aminotransferase subfamily. Requires pyridoxal 5'-phosphate as cofactor.

The catalysed reaction is an alkane-alpha,omega-diamine + 2-oxoglutarate = an omega-aminoaldehyde + L-glutamate. The enzyme catalyses putrescine + 2-oxoglutarate = 1-pyrroline + L-glutamate + H2O. It carries out the reaction cadaverine + 2-oxoglutarate = 5-aminopentanal + L-glutamate. The protein operates within amine and polyamine degradation; putrescine degradation; 4-aminobutanal from putrescine (transaminase route): step 1/1. In terms of biological role, catalyzes the aminotransferase reaction from putrescine to 2-oxoglutarate, leading to glutamate and 4-aminobutanal, which spontaneously cyclizes to form 1-pyrroline. This is the first step in one of two pathways for putrescine degradation, where putrescine is converted into 4-aminobutanoate (gamma-aminobutyrate or GABA) via 4-aminobutanal. Also functions as a cadaverine transaminase in a a L-lysine degradation pathway to succinate that proceeds via cadaverine, glutarate and L-2-hydroxyglutarate. In Salmonella dublin (strain CT_02021853), this protein is Putrescine aminotransferase.